The following is a 1000-amino-acid chain: C2 domain-containing protein 5 (1000 aa).

One can recognise a C2 domain in the interval 1-109 (MPGKLKVKIV…EAATVISGWF (109 aa)). Residues Asp19, Asp26, Asp76, Asp78, Ser81, and Asp84 each contribute to the Ca(2+) site. Residue Ser197 is modified to Phosphoserine; by PKB/AKT2. 2 positions are modified to phosphoserine: Ser200 and Ser260. The disordered stretch occupies residues 265-330 (MKEIPFNEDP…SGSAGKEGGP (66 aa)). Over residues 274–289 (PNPNTHSSGPSTPLKN) the composition is skewed to polar residues. Residues 290-318 (QTYSFSPSKSYSRQSSSSDTDLSLTPKTG) are compositionally biased toward low complexity. A phosphoserine mark is found at Ser293, Ser295, Ser304, Ser305, and Ser306. At Thr317 the chain carries Phosphothreonine. Over residues 319 to 328 (MGSGSAGKEG) the composition is skewed to gly residues. At Ser323 the chain carries Phosphoserine. At Thr601 the chain carries Phosphothreonine. Positions 639 to 669 (EIIGSPIPEPRQRSRLLRSQSESSDEVTELD) are disordered. 5 positions are modified to phosphoserine: Ser643, Ser657, Ser659, Ser661, and Ser662. Thr666 is modified (phosphothreonine). Ser671 carries the phosphoserine modification. The residue at position 807 (Thr807) is a Phosphothreonine. Ser817 and Ser852 each carry phosphoserine.

Ca(2+) serves as cofactor. Phosphorylated on Ser-197 by active myristoylated kinase AKT2; insulin-stimulated phosphorylation by AKT2 regulates SLC2A4/GLUT4 translocation into the plasma membrane.

The protein resides in the cytoplasmic vesicle membrane. It localises to the cytoplasm. It is found in the cell cortex. Its subcellular location is the cell membrane. The protein localises to the cell projection. The protein resides in the ruffle. In terms of biological role, required for insulin-stimulated glucose transport and glucose transporter SLC2A4/GLUT4 translocation from intracellular glucose storage vesicle (GSV) to the plasma membrane (PM) in adipocytes. Binds phospholipid membranes in a calcium-dependent manner and is necessary for the optimal membrane fusion between SLC2A4/GLUT4 GSV and the PM. This Pongo abelii (Sumatran orangutan) protein is C2 domain-containing protein 5 (C2CD5).